The primary structure comprises 179 residues: Coiled-coil domain-containing protein 32 (179 aa).

The interval 36–65 (DNAFSDSFMDSHPAGESHTAAADSAVQPAG) is disordered. The stretch at 75 to 98 (EVYLASLEKKLRRIKGLNEEVTSK) forms a coiled coil. Residues 158 to 179 (LIPPESQAEKPEAGDKPAAAEQ) form a disordered region.

In terms of assembly, interacts with AP2S1; the interaction is direct and mediates association with adaptor protein complex 2 (AP-2).

It localises to the membrane. It is found in the coated pit. In terms of biological role, regulates clathrin-mediated endocytsois of cargos such as transferrin probably through the association and modulation of adaptor protein complex 2 (AP-2). Has a role in ciliogenesis. Required for proper cephalic and left/right axis development. This is Coiled-coil domain-containing protein 32 (Ccdc32) from Mus musculus (Mouse).